Reading from the N-terminus, the 361-residue chain is C3a anaphylatoxin chemotactic receptor (361 aa).

Over 1 to 64 the chain is Extracellular; the sequence is MQQETQAPPL…FASSEVRVIS (64 aa). N-linked (GlcNAc...) asparagine glycans are attached at residues Asn-36 and Asn-50. A helical transmembrane segment spans residues 65 to 85; sequence LVVYCLTFLLGVPGNSFVIFI. Residues 86-96 lie on the Cytoplasmic side of the membrane; that stretch reads AGMKMKRTVNT. The chain crosses the membrane as a helical span at residues 97–117; it reads IWFLNLATADLLCCLSVPLTV. Residues 118-134 lie on the Extracellular side of the membrane; the sequence is AEILLDHHWPYGYAMCK. A disulfide bridge connects residues Cys-133 and Cys-210. A helical membrane pass occupies residues 135–155; sequence ILPSVIVISMFASVFTLNIIS. Residues 156-177 lie on the Cytoplasmic side of the membrane; that stretch reads LDRFTQVITPVWAQNHRSLLLA. A helical transmembrane segment spans residues 178–198; sequence RLSCVAVWILALLLSLPFMIL. Residues 199–224 are Extracellular-facing; the sequence is RRTYEEFNMTVCTFDDDDFTTYGALS. Residues 225–245 form a helical membrane-spanning segment; that stretch reads IVRFVFGFLIPLMSIVTCYGI. Over 246–262 the chain is Cytoplasmic; it reads IARKLGSRHFRSGRAFR. The helical transmembrane segment at 263-283 threads the bilayer; the sequence is IMLAVIVAFFLCWMPYHVLDL. Residues 284-301 are Extracellular-facing; it reads IRSYGGESSSMVALKVDP. A helical transmembrane segment spans residues 302–322; that stretch reads LAISLAYVNSCLNPVLYVFMG. Residues 323-361 are Cytoplasmic-facing; that stretch reads QDFKNKVQLSLRRVFERAFSEEGTQISRSTQSQQVHSVL.

Belongs to the G-protein coupled receptor 1 family.

The protein resides in the cell membrane. In terms of biological role, receptor for the chemotactic and inflammatory peptide anaphylatoxin C3a. This receptor stimulates chemotaxis, granule enzyme release and superoxide anion production. This chain is C3a anaphylatoxin chemotactic receptor (c3ar1), found in Danio rerio (Zebrafish).